We begin with the raw amino-acid sequence, 341 residues long: Heat-inducible transcription repressor HrcA (341 aa).

The protein belongs to the HrcA family.

Its function is as follows. Negative regulator of class I heat shock genes (grpE-dnaK-dnaJ and groELS operons). Prevents heat-shock induction of these operons. This chain is Heat-inducible transcription repressor HrcA, found in Brevibacillus brevis (strain 47 / JCM 6285 / NBRC 100599).